The following is a 231-amino-acid chain: 5'-methylthioadenosine/S-adenosylhomocysteine nucleosidase (231 aa).

Glutamate 12 functions as the Proton acceptor in the catalytic mechanism. Residues glycine 78, methionine 153, and methionine 174–glutamate 175 each bind substrate. The active-site Proton donor is the aspartate 198.

This sequence belongs to the PNP/UDP phosphorylase family. MtnN subfamily.

It catalyses the reaction S-adenosyl-L-homocysteine + H2O = S-(5-deoxy-D-ribos-5-yl)-L-homocysteine + adenine. It carries out the reaction S-methyl-5'-thioadenosine + H2O = 5-(methylsulfanyl)-D-ribose + adenine. The enzyme catalyses 5'-deoxyadenosine + H2O = 5-deoxy-D-ribose + adenine. The protein operates within amino-acid biosynthesis; L-methionine biosynthesis via salvage pathway; S-methyl-5-thio-alpha-D-ribose 1-phosphate from S-methyl-5'-thioadenosine (hydrolase route): step 1/2. In terms of biological role, catalyzes the irreversible cleavage of the glycosidic bond in both 5'-methylthioadenosine (MTA) and S-adenosylhomocysteine (SAH/AdoHcy) to adenine and the corresponding thioribose, 5'-methylthioribose and S-ribosylhomocysteine, respectively. Also cleaves 5'-deoxyadenosine, a toxic by-product of radical S-adenosylmethionine (SAM) enzymes, into 5-deoxyribose and adenine. The chain is 5'-methylthioadenosine/S-adenosylhomocysteine nucleosidase from Bacillus pumilus (strain SAFR-032).